The following is a 154-amino-acid chain: Superoxide dismutase [Cu-Zn] (154 aa).

Cu cation is bound by residues His-47, His-49, and His-64. Residues Cys-58 and Cys-147 are joined by a disulfide bond. Residues His-64, His-72, His-81, and Asp-84 each contribute to the Zn(2+) site. Position 121 (His-121) interacts with Cu cation. Residues 125–137 (DDLGRGGNEESKK) show a composition bias toward basic and acidic residues. The interval 125–147 (DDLGRGGNEESKKTGNAGPRPAC) is disordered. Arg-144 contributes to the substrate binding site.

This sequence belongs to the Cu-Zn superoxide dismutase family. In terms of assembly, homodimer. Cu cation is required as a cofactor. Zn(2+) serves as cofactor.

The protein resides in the cytoplasm. It catalyses the reaction 2 superoxide + 2 H(+) = H2O2 + O2. Its function is as follows. Destroys radicals which are normally produced within the cells and which are toxic to biological systems. This Aspergillus niger (strain ATCC MYA-4892 / CBS 513.88 / FGSC A1513) protein is Superoxide dismutase [Cu-Zn].